Consider the following 298-residue polypeptide: Protease HtpX homolog (298 aa).

2 helical membrane passes run 14-34 and 39-59; these read VVLL…AGYL and YAMG…SMIF. His-143 contributes to the Zn(2+) binding site. Glu-144 is an active-site residue. His-147 serves as a coordination point for Zn(2+). Transmembrane regions (helical) follow at residues 158–178 and 197–217; these read IAVA…RMLW and IITL…ASLI. Glu-226 is a Zn(2+) binding site.

This sequence belongs to the peptidase M48B family. Requires Zn(2+) as cofactor.

It is found in the cell membrane. This chain is Protease HtpX homolog, found in Streptococcus pyogenes serotype M1.